The sequence spans 147 residues: Adenylylsulfatase HINT1 (147 aa).

An HIT domain is found at 37–147; it reads IFDKIISKEI…GGRQMNWPPG (111 aa). The Histidine triad motif signature appears at 131-135; it reads HIHVH. The active-site Tele-AMP-histidine intermediate is the His-133. Residue His-135 participates in substrate binding.

The protein localises to the peroxisome. Its subcellular location is the plastid. The protein resides in the chloroplast. The catalysed reaction is adenosine 5'-phosphosulfate + H2O = sulfate + AMP + 2 H(+). Its function is as follows. Possesses adenylylsulfatase activity in vitro. The polypeptide is Adenylylsulfatase HINT1 (Arabidopsis thaliana (Mouse-ear cress)).